The primary structure comprises 121 residues: Basic phospholipase A2 homolog AppP2 (121 aa).

Cystine bridges form between Cys26/Cys115, Cys28/Cys44, Cys43/Cys95, Cys49/Cys121, Cys50/Cys88, Cys57/Cys81, and Cys75/Cys86. An important for membrane-damaging activities in eukaryotes and bacteria; heparin-binding region spans residues 105 to 117 (KKYKAYFKLKCKK).

It belongs to the phospholipase A2 family. Group II subfamily. K49 sub-subfamily. As to quaternary structure, monomer. As to expression, expressed by the venom gland.

Its subcellular location is the secreted. In terms of biological role, snake venom phospholipase A2 (PLA2) that lacks enzymatic activity. Displays edema-inducing activities. Is myotoxic. A model of myotoxic mechanism has been proposed: an apo Lys49-PLA2 is activated by the entrance of a hydrophobic molecule (e.g. fatty acid) at the hydrophobic channel of the protein leading to a reorientation of a monomer. This reorientation causes a transition between 'inactive' to 'active' states, causing alignment of C-terminal and membrane-docking sites (MDoS) side-by-side and putting the membrane-disruption sites (MDiS) in the same plane, exposed to solvent and in a symmetric position for both monomers. The MDoS region stabilizes the toxin on membrane by the interaction of charged residues with phospholipid head groups. Subsequently, the MDiS region destabilizes the membrane with penetration of hydrophobic residues. This insertion causes a disorganization of the membrane, allowing an uncontrolled influx of ions (i.e. calcium and sodium), and eventually triggering irreversible intracellular alterations and cell death. The polypeptide is Basic phospholipase A2 homolog AppP2 (Agkistrodon piscivorus piscivorus (Eastern cottonmouth)).